The chain runs to 480 residues: DnaJ homolog subfamily A member 3, mitochondrial (480 aa).

R58 carries the omega-N-methylarginine; by CARM1 modification. A J domain is found at 93–158 (DYYQILGVPR…VKRKQYDAYG (66 aa)). The residue at position 134 (K134) is an N6-acetyllysine. The segment at 223 to 301 (GVNKEFTVNI…CRGAGQAKQK (79 aa)) adopts a CR-type zinc-finger fold. C236 is a Zn(2+) binding site. 4 CXXCXGXG motif repeats span residues 236–243 (CERCDGKG), 253–260 (CHYCGGSG), 275–282 (CRRCGGRG), and 289–296 (CVVCRGAG). R238 carries the post-translational modification Omega-N-methylarginine; by CARM1. 7 residues coordinate Zn(2+): C239, C253, C256, C275, C278, C289, and C292. At R293 the chain carries Omega-N-methylarginine; by CARM1. S398 is subject to Phosphoserine. The segment at 437 to 468 (TVNGVTHTSTGGRTMDSSAGSKDRREAGEDNE) is disordered. The span at 439–456 (NGVTHTSTGGRTMDSSAG) shows a compositional bias: polar residues.

As to quaternary structure, interacts with JAK2, HSPA9B and IFN-gammaR2 chain. Interacts with Ras GTPase-activating protein 1 (RASA1). Isoform 2 interacts with MUSK (via the cytoplasmic domain). Post-translationally, tyrosine phosphorylated.

It localises to the mitochondrion matrix. The protein resides in the cytoplasm. Its subcellular location is the cytosol. It is found in the postsynaptic cell membrane. Modulates apoptotic signal transduction or effector structures within the mitochondrial matrix. Affect cytochrome C release from the mitochondria and caspase 3 activation, but not caspase 8 activation. Isoform 1 increases apoptosis triggered by both TNF and the DNA-damaging agent mytomycin C; in sharp contrast, isoform 2 suppresses apoptosis. Can modulate IFN-gamma-mediated transcriptional activity. Isoform 2 may play a role in neuromuscular junction development as an effector of the MUSK signaling pathway. This chain is DnaJ homolog subfamily A member 3, mitochondrial (Dnaja3), found in Mus musculus (Mouse).